The primary structure comprises 261 residues: Oligodendrocyte transcription factor 1 (261 aa).

The disordered stretch occupies residues 41 to 105; sequence PPISSSSSTS…LRRKINSRER (65 aa). Residues 44–56 are compositionally biased toward low complexity; that stretch reads SSSSSTSSSSTAS. The bHLH domain occupies 95–154; sequence QLRRKINSRERKRMQDLNLAMDALREVILPYSAAHCQGAPGRKLSKIATLLLARNYILLL.

In terms of tissue distribution, expressed specifically in the brain, including the corpus callosum, hippocampal and cerebral white matter. Also detected in cells scattered in gray matter, most probably in oligodendrocytes.

The protein resides in the nucleus. Its function is as follows. Promotes formation and maturation of oligodendrocytes, especially within the brain. Cooperates with OLIG2 to establish the pMN domain of the embryonic neural tube. The protein is Oligodendrocyte transcription factor 1 (Olig1) of Rattus norvegicus (Rat).